An 85-amino-acid polypeptide reads, in one-letter code: MAVKIRLARHGAKGKPFYRIVVADARSPRDGKFIDRVGTYDPRKEPSEIKVDAEKAREWLRKGAQPTDQVRNLLRISGVLEEQKG.

Belongs to the bacterial ribosomal protein bS16 family.

The protein is Small ribosomal subunit protein bS16 of Rubrobacter xylanophilus (strain DSM 9941 / JCM 11954 / NBRC 16129 / PRD-1).